Here is a 414-residue protein sequence, read N- to C-terminus: Serine--tRNA ligase (414 aa).

230–232 (TSE) is an L-serine binding site. ATP is bound at residue 261-263 (RQE). Residue E284 coordinates L-serine. Position 348–351 (348–351 (EISS)) interacts with ATP. S382 provides a ligand contact to L-serine.

The protein belongs to the class-II aminoacyl-tRNA synthetase family. Type-1 seryl-tRNA synthetase subfamily. In terms of assembly, homodimer. The tRNA molecule binds across the dimer.

It is found in the cytoplasm. It carries out the reaction tRNA(Ser) + L-serine + ATP = L-seryl-tRNA(Ser) + AMP + diphosphate + H(+). It catalyses the reaction tRNA(Sec) + L-serine + ATP = L-seryl-tRNA(Sec) + AMP + diphosphate + H(+). Its pathway is aminoacyl-tRNA biosynthesis; selenocysteinyl-tRNA(Sec) biosynthesis; L-seryl-tRNA(Sec) from L-serine and tRNA(Sec): step 1/1. Its function is as follows. Catalyzes the attachment of serine to tRNA(Ser). Is also able to aminoacylate tRNA(Sec) with serine, to form the misacylated tRNA L-seryl-tRNA(Sec), which will be further converted into selenocysteinyl-tRNA(Sec). This is Serine--tRNA ligase from Campylobacter concisus (strain 13826).